Reading from the N-terminus, the 641-residue chain is 1-deoxy-D-xylulose-5-phosphate synthase (641 aa).

Thiamine diphosphate-binding positions include H71 and 112 to 114 (SHA). D144 contacts Mg(2+). Residues 145–146 (GA), N173, Y284, and E365 contribute to the thiamine diphosphate site. A Mg(2+)-binding site is contributed by N173.

Belongs to the transketolase family. DXPS subfamily. Homodimer. Mg(2+) serves as cofactor. The cofactor is thiamine diphosphate.

The enzyme catalyses D-glyceraldehyde 3-phosphate + pyruvate + H(+) = 1-deoxy-D-xylulose 5-phosphate + CO2. It participates in metabolic intermediate biosynthesis; 1-deoxy-D-xylulose 5-phosphate biosynthesis; 1-deoxy-D-xylulose 5-phosphate from D-glyceraldehyde 3-phosphate and pyruvate: step 1/1. Functionally, catalyzes the acyloin condensation reaction between C atoms 2 and 3 of pyruvate and glyceraldehyde 3-phosphate to yield 1-deoxy-D-xylulose-5-phosphate (DXP). The sequence is that of 1-deoxy-D-xylulose-5-phosphate synthase from Mycolicibacterium paratuberculosis (strain ATCC BAA-968 / K-10) (Mycobacterium paratuberculosis).